A 349-amino-acid chain; its full sequence is Methylglutaconyl-CoA hydratase 1, mitochondrial (349 aa).

A mitochondrion-targeting transit peptide spans M1–Y37.

The protein belongs to the enoyl-CoA hydratase/isomerase family. Homohexamer.

It localises to the mitochondrion. It catalyses the reaction (3S)-3-hydroxy-3-methylglutaryl-CoA = 3-methyl-(2E)-glutaconyl-CoA + H2O. Its pathway is amino-acid degradation; L-leucine degradation; (S)-3-hydroxy-3-methylglutaryl-CoA from 3-isovaleryl-CoA: step 3/3. Functionally, 3-methylglutaconyl-CoA hydratase that catalyzes the fifth step in the leucine degradation pathway, the reversible hydration of 3-methylglutaconyl-CoA (3-MG-CoA) to 3-hydroxy-3-methylglutaryl-CoA (HMG-CoA). Involved in vegetative growth, conidiation and in the stress response. Controls mitochondrial morphology and mitophagy, which are critical for the infectious growth of the pathogen. This Pyricularia oryzae (strain 70-15 / ATCC MYA-4617 / FGSC 8958) (Rice blast fungus) protein is Methylglutaconyl-CoA hydratase 1, mitochondrial.